The primary structure comprises 581 residues: Moesin/ezrin/radixin homolog 1 (581 aa).

Positions 8–298 constitute an FERM domain; sequence MNVRVTTMDA…GNHELYMRRR (291 aa). Residues 452 to 519 form a disordered region; that stretch reads QVAKGSRAAA…EERRTLAERN (68 aa). Low complexity predominate over residues 459-469; that stretch reads AAAALQAATTT. The segment covering 477–486 has biased composition (acidic residues); it reads EEEENEEELI. A compositionally biased stretch (basic and acidic residues) spans 495 to 519; the sequence is FSKDFDTDEHIKDPVEERRTLAERN. Thr562 carries the post-translational modification Phosphothreonine.

Interacts with cytoskeletal actin.

It is found in the cell junction. The protein resides in the adherens junction. It localises to the cell projection. Its subcellular location is the microvillus. The protein localises to the rhabdomere. It is found in the cell membrane. The protein resides in the cytoplasm. It localises to the cytoskeleton. In terms of biological role, involved in connections of major cytoskeletal structures to the plasma membrane. This is Moesin/ezrin/radixin homolog 1 from Anopheles gambiae (African malaria mosquito).